The chain runs to 421 residues: Serine--tRNA ligase (421 aa).

An L-serine-binding site is contributed by 229–231 (TAE). 260 to 262 (RAE) provides a ligand contact to ATP. L-serine is bound at residue E283. 347–350 (EISS) serves as a coordination point for ATP. S383 contributes to the L-serine binding site.

Belongs to the class-II aminoacyl-tRNA synthetase family. Type-1 seryl-tRNA synthetase subfamily. As to quaternary structure, homodimer. The tRNA molecule binds across the dimer.

It is found in the cytoplasm. The enzyme catalyses tRNA(Ser) + L-serine + ATP = L-seryl-tRNA(Ser) + AMP + diphosphate + H(+). It catalyses the reaction tRNA(Sec) + L-serine + ATP = L-seryl-tRNA(Sec) + AMP + diphosphate + H(+). Its pathway is aminoacyl-tRNA biosynthesis; selenocysteinyl-tRNA(Sec) biosynthesis; L-seryl-tRNA(Sec) from L-serine and tRNA(Sec): step 1/1. Functionally, catalyzes the attachment of serine to tRNA(Ser). Is also able to aminoacylate tRNA(Sec) with serine, to form the misacylated tRNA L-seryl-tRNA(Sec), which will be further converted into selenocysteinyl-tRNA(Sec). The polypeptide is Serine--tRNA ligase (Desulfitobacterium hafniense (strain DSM 10664 / DCB-2)).